A 282-amino-acid chain; its full sequence is AB hydrolase superfamily protein FGSG_00045 (282 aa).

The segment covering 1-10 (MAPISSTRPS) has biased composition (polar residues). Positions 1–22 (MAPISSTRPSHSIAADNPNPTT) are disordered. Residues 22 to 270 (TQVNFNTNMT…FADMVKRWII (249 aa)) form the AB hydrolase-1 domain.

Belongs to the AB hydrolase superfamily.

It participates in mycotoxin biosynthesis. Functionally, AB hydrolase superfamily protein; part of the gene cluster that mediates the biosynthesis of gramillins A and B, bicyclic lipopeptides that induce cell death in maize leaves but not in wheat leaves. The nonribosomal peptide synthetase GRA1 incorporates respectively a glutamic adic (Glu), a leucine (Leu), a serine (Ser), a hydroxyglutamine (HOGln), a 2-amino decanoic acid, and 2 cysteins (CysB and CysA). The biosynthesis of 2-amino decanoic acid incorporated in gramillins could be initiated by a fatty acid synthase composed of the alpha and beta subunits FGSG_00036 and FGSG_11656. The cytochrome P450 monooxygenase FGSG_15680 could hydroxylate the fatty acid chain. Subsequent oxidation to the ketone by the oxidoreductase FGSG_00048 and transamination by aminotransferase FGSG_00049 could form 2-amino-decanoic acid. On the other hand, FGSG_15680 could also be responsible for the HO-modified glutamine at the gamma-position. Whether hydroxylation occurs on the fully assembled product or on the Gln residue prior to assembly into the gramillins requires further proof. The thioredoxin FGSG_00043 could also be required for the disulfide-bond formation between CysA and CysB. The specific involvement of the remaining proteins from the cluster is more difficult to discern, but could have broader regulatory (FGSG_00040 and FGSG_11657) or enzymatic functions (FGSG_00044 and FGSG_00045). The final C-domain of GRA1 does not possess the expected sequence of a termination CT domain, often implicated in macrocyclization and release of a cyclopeptidein fungal NRPs; and the thioesterase FGSG_00047 may act in concert with the terminal C-domain of GRA1 to catalyze the formation of the macrocyclic anhydride and release of the products. This is AB hydrolase superfamily protein FGSG_00045 from Gibberella zeae (strain ATCC MYA-4620 / CBS 123657 / FGSC 9075 / NRRL 31084 / PH-1) (Wheat head blight fungus).